A 460-amino-acid polypeptide reads, in one-letter code: Dynactin subunit 4 (460 aa).

At alanine 2 the chain carries N-acetylalanine. A coiled-coil region spans residues 152 to 172 (QQLAQKEKVERDRKKLARRRN). Phosphoserine is present on serine 196. Lysine 215 is covalently cross-linked (Glycyl lysine isopeptide (Lys-Gly) (interchain with G-Cter in SUMO2)). Position 407 is a phosphothreonine (threonine 407).

It belongs to the dynactin subunit 4 family. As to quaternary structure, subunit of dynactin, a multiprotein complex part of a tripartite complex with dynein and a adapter, such as BICDL1, BICD2 or HOOK3. The dynactin complex is built around ACTR1A/ACTB filament and consists of an actin-related filament composed of a shoulder domain, a pointed end and a barbed end. Its length is defined by its flexible shoulder domain. The soulder is composed of 2 DCTN1 subunits, 4 DCTN2 and 2 DCTN3. The 4 DCNT2 (via N-terminus) bind the ACTR1A filament and act as molecular rulers to determine the length. The pointed end is important for binding dynein-dynactin cargo adapters. Consists of 4 subunits: ACTR10, DCNT4, DCTN5 and DCTN6. The barbed end is composed of a CAPZA1:CAPZB heterodimers, which binds ACTR1A/ACTB filament and dynactin and stabilizes dynactin. Interacts with ATP7B, but not ATP7A, in a copper-dependent manner. Interacts with ANK2; this interaction is required for localization at costameres. Interacts with N4BP2L1.

The protein resides in the cytoplasm. The protein localises to the cytoskeleton. Its subcellular location is the microtubule organizing center. It is found in the centrosome. It localises to the stress fiber. The protein resides in the cell cortex. The protein localises to the myofibril. Its subcellular location is the sarcomere. Part of the dynactin complex that activates the molecular motor dynein for ultra-processive transport along microtubules. This Pongo abelii (Sumatran orangutan) protein is Dynactin subunit 4 (DCTN4).